The primary structure comprises 159 residues: Transcriptional repressor NrdR (159 aa).

A zinc finger spans residues 3–34 (CPFCNAADSKVIDSRLAAEGCQIRRRRECISC). In terms of domain architecture, ATP-cone spans 49–139 (PRVIKSNGKN…VYQDFQDVEA (91 aa)).

Belongs to the NrdR family. It depends on Zn(2+) as a cofactor.

Its function is as follows. Negatively regulates transcription of bacterial ribonucleotide reductase nrd genes and operons by binding to NrdR-boxes. In Acinetobacter baylyi (strain ATCC 33305 / BD413 / ADP1), this protein is Transcriptional repressor NrdR.